A 250-amino-acid chain; its full sequence is Bacteriorhodopsin-II (250 aa).

Transmembrane regions (helical) follow at residues 14 to 34 (EGIW…YFMA), 49 to 69 (VITI…FFGF), 89 to 109 (YADW…LAGA), 114 to 134 (MASL…ATLM), 142 to 162 (AFWT…VVVV), 183 to 203 (IILV…EGLG), and 210 to 230 (ETLL…FILL). An N6-(retinylidene)lysine modification is found at Lys222.

Belongs to the archaeal/bacterial/fungal opsin family. In terms of processing, the covalent binding of retinal to the apoprotein, bacterioopsin, generates bacteriorhodopsin.

It is found in the membrane. Its function is as follows. Light-driven proton pump. The protein is Bacteriorhodopsin-II (xop1) of Haloarcula marismortui (strain ATCC 43049 / DSM 3752 / JCM 8966 / VKM B-1809) (Halobacterium marismortui).